The sequence spans 107 residues: Ferredoxin-1 (107 aa).

4Fe-4S ferredoxin-type domains follow at residues 2–30 and 31–60; these read AFVV…YEGP and NFLV…SEDE. Positions 9 and 17 each coordinate [3Fe-4S] cluster. Residues Cys-21, Cys-40, Cys-43, and Cys-46 each coordinate [4Fe-4S] cluster. Cys-50 provides a ligand contact to [3Fe-4S] cluster. The segment at 84-107 is disordered; it reads EKKDPLPDAEDWDGVKGKLQHLER. The segment covering 96–107 has biased composition (basic and acidic residues); the sequence is DGVKGKLQHLER.

The cofactor is [4Fe-4S] cluster. [3Fe-4S] cluster serves as cofactor.

Its function is as follows. Ferredoxins are iron-sulfur proteins that transfer electrons in a wide variety of metabolic reactions. This ferredoxin could play a role in regulating gene expression by interacting directly with DNA. The chain is Ferredoxin-1 (fdxA) from Azotobacter vinelandii.